A 485-amino-acid polypeptide reads, in one-letter code: MAVKPKQPPAQEQHGYEFFGPPGAFAISFFLPVLVYVFNFVCNDISGCPAPSLLQPKTFSLDALKQEVGWPHNGVAGLVSWNGTLAVIGYNVLSLILYRVLPAIEVEGTQLSSGGRLKYRFNTLYSSTFTLAVLAAGTIAQGAEFPVWTFMSENFIQILSANIIYSYLVSTFVYVRSFSVKHGNKENRELAAGGHSGNILYDWFIGRELNPRIEIPLIGEVDIKEFLELRPGMMGWIIMNCSWCAQQYRNYGFVTDSSILITAVQALYVFDSWWNEPAILTTMDITTDGFGMMLAFGDIVWVPYVYSLQTRYLSVHPVSLGPLGLAAMLGLIGLGFYIFRSANNEKNRFRTNPNDPRVSHLKYIQTKTGSKLLTTGWWGMSRHINYLGDWIQSWPYCLPTGLAGYQIMSAGANIEGAYVMHDGREVVQGEAQGWGMLITYFYILYFGILLIHRERRDDEKCHRKYGKDWEEYRKIVRSRIVPGLY.

The next 4 membrane-spanning stretches (helical) occupy residues 18-38 (FFGP…VYVF), 77-97 (GLVS…SLIL), 131-151 (LAVL…WTFM), and 155-175 (FIQI…FVYV). Residue Asn240 is glycosylated (N-linked (GlcNAc...) asparagine). Transmembrane regions (helical) follow at residues 259–279 (ILIT…EPAI), 285–305 (ITTD…VPYV), 319–339 (SLGP…FYIF), and 431–451 (AQGW…ILLI).

It belongs to the ERG4/ERG24 family.

It is found in the endoplasmic reticulum membrane. It catalyses the reaction 4,4-dimethyl-5alpha-cholesta-8,24-dien-3beta-ol + NADP(+) = 4,4-dimethyl-5alpha-cholesta-8,14,24-trien-3beta-ol + NADPH + H(+). It functions in the pathway steroid metabolism; ergosterol biosynthesis. Functionally, delta(14)-sterol reductase; part of the third module of ergosterol biosynthesis pathway that includes the late steps of the pathway. Catalyzes the reduction of the C14=C15 double bond within 4,4,24-trimethyl ergosta-8,14,24(28)-trienolto produce 4,4-dimethylfecosterol. The third module or late pathway involves the ergosterol synthesis itself through consecutive reactions that mainly occur in the endoplasmic reticulum (ER) membrane. Firstly, the squalene synthase ERG9 catalyzes the condensation of 2 farnesyl pyrophosphate moieties to form squalene, which is the precursor of all steroids. Squalene synthase is crucial for balancing the incorporation of farnesyl diphosphate (FPP) into sterol and nonsterol isoprene synthesis. Secondly, squalene is converted into lanosterol by the consecutive action of the squalene epoxidase ERG1 and the lanosterol synthase ERG7. Then, the delta(24)-sterol C-methyltransferase ERG6 methylates lanosterol at C-24 to produce eburicol. Eburicol is the substrate of the sterol 14-alpha demethylase encoded by CYP51A, CYP51B and CYP51C, to yield 4,4,24-trimethyl ergosta-8,14,24(28)-trienol. CYP51B encodes the enzyme primarily responsible for sterol 14-alpha-demethylation, and plays an essential role in ascospore formation. CYP51A encodes an additional sterol 14-alpha-demethylase, induced on ergosterol depletion and responsible for the intrinsic variation in azole sensitivity. The third CYP51 isoform, CYP51C, does not encode a sterol 14-alpha-demethylase, but is required for full virulence on host wheat ears. The C-14 reductase ERG24 then reduces the C14=C15 double bond which leads to 4,4-dimethylfecosterol. A sequence of further demethylations at C-4, involving the C-4 demethylation complex containing the C-4 methylsterol oxidases ERG25, the sterol-4-alpha-carboxylate 3-dehydrogenase ERG26 and the 3-keto-steroid reductase ERG27, leads to the production of fecosterol via 4-methylfecosterol. ERG28 has a role as a scaffold to help anchor ERG25, ERG26 and ERG27 to the endoplasmic reticulum. The C-8 sterol isomerase ERG2 then catalyzes the reaction which results in unsaturation at C-7 in the B ring of sterols and thus converts fecosterol to episterol. The sterol-C5-desaturases ERG3A and ERG3BB then catalyze the introduction of a C-5 double bond in the B ring to produce 5-dehydroepisterol. The C-22 sterol desaturases ERG5A and ERG5B further convert 5-dehydroepisterol into ergosta-5,7,22,24(28)-tetraen-3beta-ol by forming the C-22(23) double bond in the sterol side chain. Finally, ergosta-5,7,22,24(28)-tetraen-3beta-ol is substrate of the C-24(28) sterol reductase ERG4 to produce ergosterol. In Gibberella zeae (strain ATCC MYA-4620 / CBS 123657 / FGSC 9075 / NRRL 31084 / PH-1) (Wheat head blight fungus), this protein is Delta(14)-sterol reductase ERG24A.